The following is a 454-amino-acid chain: F-box/WD repeat-containing protein 2 (454 aa).

One can recognise an F-box domain in the interval 54 to 101; that stretch reads RDFLKLLPLELSFYLLKWLDPQTLLTCCLVSKQWNKVISACTEVWQTA. 7 WD repeats span residues 139–175, 179–213, 217–255, 259–306, 313–352, 364–403, and 410–452; these read FETS…LWDV, QCVY…CWEW, ARTQ…VWAL, TCLN…IWPI, KCLK…QWDF, PEIA…RWPL, and KRGS…LWKE. Lysine 298 bears the N6-acetyllysine mark.

In terms of assembly, directly interacts with SKP1 and CUL1.

Functionally, substrate-recognition component of the SCF (SKP1-CUL1-F-box protein)-type E3 ubiquitin ligase complex. This is F-box/WD repeat-containing protein 2 (FBXW2) from Homo sapiens (Human).